Consider the following 155-residue polypeptide: Ribosomal RNA large subunit methyltransferase H (155 aa).

S-adenosyl-L-methionine-binding positions include leucine 73, glycine 104, and leucine 123 to leucine 128.

Belongs to the RNA methyltransferase RlmH family. As to quaternary structure, homodimer.

The protein resides in the cytoplasm. The catalysed reaction is pseudouridine(1915) in 23S rRNA + S-adenosyl-L-methionine = N(3)-methylpseudouridine(1915) in 23S rRNA + S-adenosyl-L-homocysteine + H(+). Its function is as follows. Specifically methylates the pseudouridine at position 1915 (m3Psi1915) in 23S rRNA. This is Ribosomal RNA large subunit methyltransferase H from Chromohalobacter salexigens (strain ATCC BAA-138 / DSM 3043 / CIP 106854 / NCIMB 13768 / 1H11).